Here is a 238-residue protein sequence, read N- to C-terminus: Pyridoxine 5'-phosphate synthase (238 aa).

Asn-7 contributes to the 3-amino-2-oxopropyl phosphate binding site. Asp-9–His-10 is a binding site for 1-deoxy-D-xylulose 5-phosphate. Arg-18 is a binding site for 3-amino-2-oxopropyl phosphate. His-43 serves as the catalytic Proton acceptor. 1-deoxy-D-xylulose 5-phosphate-binding residues include Arg-45 and His-50. Glu-70 (proton acceptor) is an active-site residue. Residue Thr-100 coordinates 1-deoxy-D-xylulose 5-phosphate. His-191 acts as the Proton donor in catalysis. 3-amino-2-oxopropyl phosphate is bound by residues Gly-192 and Gly-213–His-214.

The protein belongs to the PNP synthase family. Homooctamer; tetramer of dimers.

The protein resides in the cytoplasm. The catalysed reaction is 3-amino-2-oxopropyl phosphate + 1-deoxy-D-xylulose 5-phosphate = pyridoxine 5'-phosphate + phosphate + 2 H2O + H(+). Its pathway is cofactor biosynthesis; pyridoxine 5'-phosphate biosynthesis; pyridoxine 5'-phosphate from D-erythrose 4-phosphate: step 5/5. In terms of biological role, catalyzes the complicated ring closure reaction between the two acyclic compounds 1-deoxy-D-xylulose-5-phosphate (DXP) and 3-amino-2-oxopropyl phosphate (1-amino-acetone-3-phosphate or AAP) to form pyridoxine 5'-phosphate (PNP) and inorganic phosphate. The chain is Pyridoxine 5'-phosphate synthase from Syntrophobacter fumaroxidans (strain DSM 10017 / MPOB).